A 192-amino-acid chain; its full sequence is MITISEAAQAHFVKLLADQPEGTNIRVFVISPGTAQAECGVSYCPPDAVEDDDIELEFNGFNAMVDEKSAPFLEDASIDLVTDQLGSQLTLKAPNAKMRKVSADASLVERIEYVIQAEINPQLASHGGNILLVEVTDDGVAVIQFGGGCNGCSMVDVTLKDGIEKQLLDMFPGELTEVRDATEHQHGSHSYQ.

[4Fe-4S] cluster is bound by residues C149 and C152.

It belongs to the NfuA family. In terms of assembly, homodimer. It depends on [4Fe-4S] cluster as a cofactor.

Functionally, involved in iron-sulfur cluster biogenesis. Binds a 4Fe-4S cluster, can transfer this cluster to apoproteins, and thereby intervenes in the maturation of Fe/S proteins. Could also act as a scaffold/chaperone for damaged Fe/S proteins. The polypeptide is Fe/S biogenesis protein NfuA (Shewanella amazonensis (strain ATCC BAA-1098 / SB2B)).